The sequence spans 405 residues: Probable tRNA sulfurtransferase (405 aa).

Residues 60–165 (EGVIERLRHV…QDAIYLTNQV (106 aa)) form the THUMP domain. Residues 183 to 184 (ML), 208 to 209 (HF), arginine 265, glycine 287, and glutamine 296 contribute to the ATP site.

This sequence belongs to the ThiI family.

It localises to the cytoplasm. It carries out the reaction [ThiI sulfur-carrier protein]-S-sulfanyl-L-cysteine + a uridine in tRNA + 2 reduced [2Fe-2S]-[ferredoxin] + ATP + H(+) = [ThiI sulfur-carrier protein]-L-cysteine + a 4-thiouridine in tRNA + 2 oxidized [2Fe-2S]-[ferredoxin] + AMP + diphosphate. The enzyme catalyses [ThiS sulfur-carrier protein]-C-terminal Gly-Gly-AMP + S-sulfanyl-L-cysteinyl-[cysteine desulfurase] + AH2 = [ThiS sulfur-carrier protein]-C-terminal-Gly-aminoethanethioate + L-cysteinyl-[cysteine desulfurase] + A + AMP + 2 H(+). It functions in the pathway cofactor biosynthesis; thiamine diphosphate biosynthesis. In terms of biological role, catalyzes the ATP-dependent transfer of a sulfur to tRNA to produce 4-thiouridine in position 8 of tRNAs, which functions as a near-UV photosensor. Also catalyzes the transfer of sulfur to the sulfur carrier protein ThiS, forming ThiS-thiocarboxylate. This is a step in the synthesis of thiazole, in the thiamine biosynthesis pathway. The sulfur is donated as persulfide by IscS. The chain is Probable tRNA sulfurtransferase from Latilactobacillus sakei subsp. sakei (strain 23K) (Lactobacillus sakei subsp. sakei).